Here is a 470-residue protein sequence, read N- to C-terminus: MKKTKIVCTIGPKTESEEMLSKMLDAGMNVMRLNFSHGDYAEHGQRIQNLRNVMSKTGKKAAILLDTKGPEIRTIKLEGGNDVSLKAGQTFTFTTDKSVVGNNEIVAVTYEGFTSDLSVGNTVLVDDGLIGMEVTAIEGNKVICKVLNNGDLGENKGVNLPGVSIALPALAEKDKQDLIFGCEQGVDFVAASFIRKRSDVVEIREHLKAHGGENIQIISKIENQEGLNNFDEILEASDGIMVARGDLGVEIPVEEVIFAQKMMIEKCIRARKVVITATQMLDSMIKNPRPTRAEAGDVANAILDGTDAVMLSGESAKGKYPLEAVSIMATICERTDRVMNSRLDYNNDSRKLRITEAVCRGAVETAEKLKAPLIVVATQGGKSARAVRKYFPDATILALTTNEVTARQLVLSKGVVSQLVKEINSTDDFYRLGKDVALQSGLAQKGDVVVMVSGALVPSGTTNTASVHVL.

Arg-32 provides a ligand contact to substrate. Asn-34, Ser-36, Asp-66, and Thr-67 together coordinate K(+). 34 to 37 (NFSH) provides a ligand contact to ATP. Arg-73 and Lys-156 together coordinate ATP. A Mg(2+)-binding site is contributed by Glu-222. Gly-245, Asp-246, and Thr-278 together coordinate substrate. Asp-246 contributes to the Mg(2+) binding site.

Belongs to the pyruvate kinase family. As to quaternary structure, homotetramer. The cofactor is Mg(2+). Requires K(+) as cofactor.

The enzyme catalyses pyruvate + ATP = phosphoenolpyruvate + ADP + H(+). It participates in carbohydrate degradation; glycolysis; pyruvate from D-glyceraldehyde 3-phosphate: step 5/5. The chain is Pyruvate kinase I (pykF) from Salmonella typhi.